Consider the following 522-residue polypeptide: 3'3'-cGAMP-specific phosphodiesterase 2 (522 aa).

Residues 36-160 (CVLLVDDDEQ…QKLRTLLYSM (125 aa)) enclose the Response regulatory domain. At Asp91 the chain carries 4-aspartylphosphate. The HD-GYP domain occupies 325-522 (LRETSKELVY…FIAIRASLPD (198 aa)). A divalent metal cation is bound by residues His382 and Asp383. Lys386 acts as the Proton donor in catalysis. A divalent metal cation contacts are provided by His411, His437, His438, and Asp466.

As to quaternary structure, homodimer. Mn(2+) is required as a cofactor.

It carries out the reaction 3',3'-cGAMP + H2O = 5'-pApG-3' + H(+). Functionally, phosphodiesterase (PDE) that catalyzes the hydrolysis of 3'3'-cyclic GMP-AMP (3'3'-cGAMP), leading to linear 5'-pApG. Counteracts the function of the 3'3'-cGAMP synthase DncV, and is involved in the modulation of intracellular 3'3'-cGAMP levels. Enhances bacterial chemotaxis and inhibits intestinal colonization in vivo. Thus exerts a crucial role in regulating bacterial infectivity through catalyzing 3'3'-cGAMP degradation. Is specific for 3'3'-cGAMP since it cannot degrade other cGAMP linkage isomers (3'2'-, 2'3'-, and 2'2'-cGAMPs). Is also able to hydrolyze c-di-GMP but not c-di-AMP. In Vibrio cholerae serotype O1 (strain ATCC 39315 / El Tor Inaba N16961), this protein is 3'3'-cGAMP-specific phosphodiesterase 2.